The chain runs to 1294 residues: Voltage-gated inwardly rectifying potassium channel KCNH2 (1294 aa).

Residues R1–Y377 lie on the Cytoplasmic side of the membrane. The PAS domain occupies V15–H44. The PAC domain maps to R66–D118. The segment at L207–S258 is disordered. The span at G211–T223 shows a compositional bias: pro residues. S212 and S216 each carry phosphoserine. Polar residues predominate over residues P232–R243. Residues S257, S258, S294, and S325 each carry the phosphoserine modification. The helical transmembrane segment at S378–F398 threads the bilayer. Residues T399–Q424 lie on the Extracellular side of the membrane. The helical transmembrane segment at P425–F445 threads the bilayer. The Cytoplasmic portion of the chain corresponds to R446 to K469. Residues G470–G490 traverse the membrane as a helical segment. The Extracellular segment spans residues S491–L494. The helical; Voltage-sensor transmembrane segment at I495–R515 threads the bilayer. Residues Y516–A521 lie on the Cytoplasmic side of the membrane. The helical transmembrane segment at A522 to W542 threads the bilayer. At Y543 to Y585 the chain is on the extracellular side. Positions V586–P606 form an intramembrane region, pore-forming. The Selectivity filter motif lies at S598 to N603. Residues N607–K612 are Extracellular-facing. The chain crosses the membrane as a helical span at residues I613–V633. Topologically, residues S634 to Y1294 are cytoplasmic. The segment at P716–L816 is cNMP-binding domain. Residues G844–T956 form a disordered region. Residues S845 and S848 each carry the phosphoserine modification. Residues R857–R866 are compositionally biased toward basic residues. Residues G902 to E913 are compositionally biased toward low complexity. R987 is subject to Omega-N-methylarginine. Positions R1008–T1035 form a coiled coil. S1110 is subject to Phosphoserine.

This sequence belongs to the potassium channel family. H (Eag) (TC 1.A.1.20) subfamily. Kv11.1/KCNH2 sub-subfamily. In terms of assembly, the potassium channel is probably composed of a homo- or heterotetrameric complex of pore-forming alpha subunits that can associate with modulating beta subunits. Interacts with DNAJB12 and DNAJB14; chaperones DNAJB12 and DNAJB14 promote tetramerization. Heteromultimer with KCNH6/ERG2 and KCNH7/ERG3. Interacts with ALG10B. Forms a stable complex with KCNE1 or KCNE2, and that this heteromultimerization regulates Inward rectifier potassium channel activity. Interacts with CANX. The core-glycosylated, but not the fully glycosylated form interacts with RNF207. Interacts with NDFIP1 and NDFIP2; this interaction decreases the cell membrane expression by targeting KCNH2, through interaction with NEDD4L, for the degradation through the multivesicular bodies (MVBs)-lysosomal pathway. Phosphorylated on serine and threonine residues. Phosphorylation by PKA inhibits ion conduction. In terms of tissue distribution, highly expressed in heart and brain.

It is found in the cell membrane. It carries out the reaction K(+)(in) = K(+)(out). Its function is as follows. Pore-forming (alpha) subunit of voltage-gated inwardly rectifying potassium channel. Characterized by unusual gating kinetics by producing relatively small outward currents during membrane depolarization and large inward currents during subsequent repolarization which reflect a rapid inactivation during depolarization and quick recovery from inactivation but slow deactivation (closing) during repolarization. Channel properties are modulated by cAMP and subunit assembly. Forms a stable complex with KCNE1 or KCNE2, and that this heteromultimerization regulates inward rectifier potassium channel activity. The sequence is that of Voltage-gated inwardly rectifying potassium channel KCNH2 from Cavia porcellus (Guinea pig).